The sequence spans 146 residues: Large ribosomal subunit protein bL9 (146 aa).

Belongs to the bacterial ribosomal protein bL9 family.

Its function is as follows. Binds to the 23S rRNA. The chain is Large ribosomal subunit protein bL9 from Nautilia profundicola (strain ATCC BAA-1463 / DSM 18972 / AmH).